Reading from the N-terminus, the 779-residue chain is Phosphoribosylformylglycinamidine synthase subunit PurL (779 aa).

Residue His-52 is part of the active site. ATP is bound by residues Tyr-55 and Lys-94. Residue Glu-96 coordinates Mg(2+). Substrate contacts are provided by residues 97-100 (SHNH) and Arg-119. The active-site Proton acceptor is the His-98. Asp-120 is a Mg(2+) binding site. A substrate-binding site is contributed by Gln-243. Asp-271 is a Mg(2+) binding site. 315–317 (ESQ) provides a ligand contact to substrate. ATP contacts are provided by Asn-523 and Gly-560. Residue Asn-561 participates in Mg(2+) binding. Residue Ser-563 participates in substrate binding.

This sequence belongs to the FGAMS family. As to quaternary structure, monomer. Part of the FGAM synthase complex composed of 1 PurL, 1 PurQ and 2 PurS subunits.

The protein localises to the cytoplasm. It carries out the reaction N(2)-formyl-N(1)-(5-phospho-beta-D-ribosyl)glycinamide + L-glutamine + ATP + H2O = 2-formamido-N(1)-(5-O-phospho-beta-D-ribosyl)acetamidine + L-glutamate + ADP + phosphate + H(+). Its pathway is purine metabolism; IMP biosynthesis via de novo pathway; 5-amino-1-(5-phospho-D-ribosyl)imidazole from N(2)-formyl-N(1)-(5-phospho-D-ribosyl)glycinamide: step 1/2. Part of the phosphoribosylformylglycinamidine synthase complex involved in the purines biosynthetic pathway. Catalyzes the ATP-dependent conversion of formylglycinamide ribonucleotide (FGAR) and glutamine to yield formylglycinamidine ribonucleotide (FGAM) and glutamate. The FGAM synthase complex is composed of three subunits. PurQ produces an ammonia molecule by converting glutamine to glutamate. PurL transfers the ammonia molecule to FGAR to form FGAM in an ATP-dependent manner. PurS interacts with PurQ and PurL and is thought to assist in the transfer of the ammonia molecule from PurQ to PurL. The chain is Phosphoribosylformylglycinamidine synthase subunit PurL from Prochlorococcus marinus (strain AS9601).